The sequence spans 159 residues: MRIVLQKVSHAGVTVTDEAIGELDTTFTEQTIAAGYVLLVGVSDADGTRQIDWLAHKISNLRVFEDEQGKMNLSIHDVGGSILSISQFTLFADTRKGNRPSFVRAGKPEHAERVWLEFNEALRAQGLQVKEGRFGAHMNVSLVNDGPVTILFDTEELGI.

A Gly-cisPro motif, important for rejection of L-amino acids motif is present at residues 146–147; that stretch reads GP.

It belongs to the DTD family. As to quaternary structure, homodimer.

It is found in the cytoplasm. The enzyme catalyses glycyl-tRNA(Ala) + H2O = tRNA(Ala) + glycine + H(+). It catalyses the reaction a D-aminoacyl-tRNA + H2O = a tRNA + a D-alpha-amino acid + H(+). Its function is as follows. An aminoacyl-tRNA editing enzyme that deacylates mischarged D-aminoacyl-tRNAs. Also deacylates mischarged glycyl-tRNA(Ala), protecting cells against glycine mischarging by AlaRS. Acts via tRNA-based rather than protein-based catalysis; rejects L-amino acids rather than detecting D-amino acids in the active site. By recycling D-aminoacyl-tRNA to D-amino acids and free tRNA molecules, this enzyme counteracts the toxicity associated with the formation of D-aminoacyl-tRNA entities in vivo and helps enforce protein L-homochirality. In Bifidobacterium animalis subsp. lactis (strain AD011), this protein is D-aminoacyl-tRNA deacylase.